A 253-amino-acid polypeptide reads, in one-letter code: Small ribosomal subunit protein eS4 (253 aa).

Positions 43–114 (LPLLLIVRNV…YPVKFFKLHP (72 aa)) constitute an S4 RNA-binding domain.

It belongs to the eukaryotic ribosomal protein eS4 family.

The sequence is that of Small ribosomal subunit protein eS4 (rps4e) from Aeropyrum pernix (strain ATCC 700893 / DSM 11879 / JCM 9820 / NBRC 100138 / K1).